An 807-amino-acid chain; its full sequence is uncharacterized protein (807 aa).

It belongs to the IIV-6 155L family.

This is an uncharacterized protein from Aedes vexans (Inland floodwater mosquito).